The primary structure comprises 104 residues: Phosphoribosyl-ATP pyrophosphatase (104 aa).

The protein belongs to the PRA-PH family.

Its subcellular location is the cytoplasm. The enzyme catalyses 1-(5-phospho-beta-D-ribosyl)-ATP + H2O = 1-(5-phospho-beta-D-ribosyl)-5'-AMP + diphosphate + H(+). Its pathway is amino-acid biosynthesis; L-histidine biosynthesis; L-histidine from 5-phospho-alpha-D-ribose 1-diphosphate: step 2/9. The chain is Phosphoribosyl-ATP pyrophosphatase from Nitrosococcus oceani (strain ATCC 19707 / BCRC 17464 / JCM 30415 / NCIMB 11848 / C-107).